Reading from the N-terminus, the 275-residue chain is Elongation factor Ts (275 aa).

The tract at residues 76-79 (TDFV) is involved in Mg(2+) ion dislocation from EF-Tu.

This sequence belongs to the EF-Ts family.

Its subcellular location is the cytoplasm. Associates with the EF-Tu.GDP complex and induces the exchange of GDP to GTP. It remains bound to the aminoacyl-tRNA.EF-Tu.GTP complex up to the GTP hydrolysis stage on the ribosome. This chain is Elongation factor Ts, found in Mycobacterium avium (strain 104).